The following is a 415-amino-acid chain: Serine hydroxymethyltransferase (415 aa).

(6S)-5,6,7,8-tetrahydrofolate-binding positions include L120 and 124–126; that span reads GHL. K229 is modified (N6-(pyridoxal phosphate)lysine).

Belongs to the SHMT family. In terms of assembly, homodimer. Pyridoxal 5'-phosphate serves as cofactor.

It localises to the cytoplasm. The catalysed reaction is (6R)-5,10-methylene-5,6,7,8-tetrahydrofolate + glycine + H2O = (6S)-5,6,7,8-tetrahydrofolate + L-serine. The protein operates within one-carbon metabolism; tetrahydrofolate interconversion. It functions in the pathway amino-acid biosynthesis; glycine biosynthesis; glycine from L-serine: step 1/1. In terms of biological role, catalyzes the reversible interconversion of serine and glycine with tetrahydrofolate (THF) serving as the one-carbon carrier. This reaction serves as the major source of one-carbon groups required for the biosynthesis of purines, thymidylate, methionine, and other important biomolecules. Also exhibits THF-independent aldolase activity toward beta-hydroxyamino acids, producing glycine and aldehydes, via a retro-aldol mechanism. The chain is Serine hydroxymethyltransferase from Caldicellulosiruptor bescii (strain ATCC BAA-1888 / DSM 6725 / KCTC 15123 / Z-1320) (Anaerocellum thermophilum).